The sequence spans 152 residues: SsrA-binding protein (152 aa).

Belongs to the SmpB family.

Its subcellular location is the cytoplasm. Its function is as follows. Required for rescue of stalled ribosomes mediated by trans-translation. Binds to transfer-messenger RNA (tmRNA), required for stable association of tmRNA with ribosomes. tmRNA and SmpB together mimic tRNA shape, replacing the anticodon stem-loop with SmpB. tmRNA is encoded by the ssrA gene; the 2 termini fold to resemble tRNA(Ala) and it encodes a 'tag peptide', a short internal open reading frame. During trans-translation Ala-aminoacylated tmRNA acts like a tRNA, entering the A-site of stalled ribosomes, displacing the stalled mRNA. The ribosome then switches to translate the ORF on the tmRNA; the nascent peptide is terminated with the 'tag peptide' encoded by the tmRNA and targeted for degradation. The ribosome is freed to recommence translation, which seems to be the essential function of trans-translation. This Lactobacillus helveticus (strain DPC 4571) protein is SsrA-binding protein.